A 360-amino-acid polypeptide reads, in one-letter code: GDP-mannose transporter (360 aa).

Residues 1–49 (MSSSETKGRNEEDVAEIKKAIATGAVKDPSNLSAIPPIFVVSGANFSMN) lie on the Cytoplasmic side of the membrane. A helical membrane pass occupies residues 50 to 67 (FLLLCIQSSVCCACVFAV). Residues 68 to 84 (KKLGIISFRDFDMKDAK) are Lumenal-facing. A helical membrane pass occupies residues 85–105 (MWFPISFLLVSVIYTGSKSLQ). The Cytoplasmic segment spans residues 106-110 (YLSIP). Residues 111–131 (VYTIFKNLTIILIAYGEVLWF) traverse the membrane as a helical segment. Over 132-134 (GGR) the chain is Lumenal. A helical membrane pass occupies residues 135-155 (VTALTFVSFIFMVISSIIAAW). Residues 156-164 (SDVQSALAS) lie on the Cytoplasmic side of the membrane. Residues 165-185 (SIPGASSGVSVGAMQSLFGAL) form a helical membrane-spanning segment. Position 186 (Arg186) is a topological domain, lumenal. Residues 187-207 (GLNVGYFWMLVNCLTSAAYVL) traverse the membrane as a helical segment. The Cytoplasmic portion of the chain corresponds to 208–220 (SMRKRIKSTGFSD). The helical transmembrane segment at 221–241 (WDTMFYNNLLSIPVLAVFSLI) threads the bilayer. Topologically, residues 242–260 (AEDWGRENLNRNFPAETRN) are lumenal. The helical transmembrane segment at 261-281 (FLLFAIAFSGAAAVGISYTTA) threads the bilayer. Topologically, residues 282 to 291 (WCVRVTSSTT) are cytoplasmic. A helical transmembrane segment spans residues 292-312 (YSMVGALNKLPVAASGMLFFG). Residues 313 to 314 (DP) are Lumenal-facing. The chain crosses the membrane as a helical span at residues 315 to 335 (VTVGSVSAVGVGFFAGIVYAV). At 336-360 (AKNNQKKNERRQAADAIIPMASRKP) the chain is on the cytoplasmic side.

The protein belongs to the TPT transporter family. SLC35D subfamily. As to quaternary structure, homooligomer.

Its subcellular location is the golgi apparatus membrane. The protein resides in the cytoplasmic vesicle membrane. It is found in the endoplasmic reticulum membrane. Involved in the import of GDP-mannose from the cytoplasm into the Golgi lumen. The chain is GDP-mannose transporter (VRG4) from Coprinopsis cinerea (strain Okayama-7 / 130 / ATCC MYA-4618 / FGSC 9003) (Inky cap fungus).